The sequence spans 32 residues: Unknown protein from spot 206 of 2D-PAGE of etiolated coleoptile (32 aa).

This Zea mays (Maize) protein is Unknown protein from spot 206 of 2D-PAGE of etiolated coleoptile.